A 475-amino-acid polypeptide reads, in one-letter code: MQFSSYEDLRSRLVSHAITCEEVVRFYLERIENHRGDNIYITVFHDQALERARTLDRKLREGGNPGKLFGMPMAIKDNIAMKNCRLTCASKILENYESVYDATAVLRLEEADAIFLGKTNMDEFAMGSSNENSAFGNVPNPFDKTRVPGGSSGGSAAAVANGLALVALGSDTGGSVRQPAGFCDIVGLKPTYGRISRYGLVAFASSFDQIGVLGLNCDDVALVLGVMAGKDEGDATSSRHPVADYASEMATLSVDGLKIGVPKEYFPETLNPEVSRMVKGKLEELRAQGAELVPVTLPDSAYAIAAYYILVTAEASSNLARFDGARYGYRSEMSEDLAAMYVNSRTEGFGREVKRRIMLGTYVLSAGYYDTYYKKAQQVRRVFQDRYREALDKVDVIAGPTSPFPPFGIGDKTENPLEMYLADVFTVPASIVGMPAISVPLGFDSMNLPVGMHLICNFFEEGKLLGIARHMQRSL.

Catalysis depends on charge relay system residues K76 and S151. S175 acts as the Acyl-ester intermediate in catalysis.

This sequence belongs to the amidase family. GatA subfamily. In terms of assembly, heterotrimer of A, B and C subunits.

The enzyme catalyses L-glutamyl-tRNA(Gln) + L-glutamine + ATP + H2O = L-glutaminyl-tRNA(Gln) + L-glutamate + ADP + phosphate + H(+). In terms of biological role, allows the formation of correctly charged Gln-tRNA(Gln) through the transamidation of misacylated Glu-tRNA(Gln) in organisms which lack glutaminyl-tRNA synthetase. The reaction takes place in the presence of glutamine and ATP through an activated gamma-phospho-Glu-tRNA(Gln). The polypeptide is Glutamyl-tRNA(Gln) amidotransferase subunit A (Pelodictyon phaeoclathratiforme (strain DSM 5477 / BU-1)).